We begin with the raw amino-acid sequence, 44 residues long: Protein PsbN (44 aa).

A helical transmembrane segment spans residues Phe-6–Val-26.

It belongs to the PsbN family.

The protein localises to the plastid. It is found in the chloroplast thylakoid membrane. Its function is as follows. May play a role in photosystem I and II biogenesis. The polypeptide is Protein PsbN (Tetradesmus obliquus (Green alga)).